We begin with the raw amino-acid sequence, 314 residues long: Methionyl-tRNA formyltransferase (314 aa).

112–115 (SLLP) is a binding site for (6S)-5,6,7,8-tetrahydrofolate.

This sequence belongs to the Fmt family.

The enzyme catalyses L-methionyl-tRNA(fMet) + (6R)-10-formyltetrahydrofolate = N-formyl-L-methionyl-tRNA(fMet) + (6S)-5,6,7,8-tetrahydrofolate + H(+). Its function is as follows. Attaches a formyl group to the free amino group of methionyl-tRNA(fMet). The formyl group appears to play a dual role in the initiator identity of N-formylmethionyl-tRNA by promoting its recognition by IF2 and preventing the misappropriation of this tRNA by the elongation apparatus. This chain is Methionyl-tRNA formyltransferase, found in Tolumonas auensis (strain DSM 9187 / NBRC 110442 / TA 4).